The chain runs to 101 residues: Integration host factor subunit alpha (101 aa).

The interval 49–70 (FGNFQLRDKPQRPGRNPKTGEE) is disordered.

It belongs to the bacterial histone-like protein family. As to quaternary structure, heterodimer of an alpha and a beta chain.

This protein is one of the two subunits of integration host factor, a specific DNA-binding protein that functions in genetic recombination as well as in transcriptional and translational control. This Nitrosospira multiformis (strain ATCC 25196 / NCIMB 11849 / C 71) protein is Integration host factor subunit alpha.